A 556-amino-acid polypeptide reads, in one-letter code: Hydroxylamine reductase (556 aa).

Positions 4, 7, 19, and 26 each coordinate [4Fe-4S] cluster. Residues His-252, Glu-276, Cys-320, Cys-407, Cys-435, Cys-460, Glu-494, and Lys-496 each coordinate hybrid [4Fe-2O-2S] cluster. Cys-407 is modified (cysteine persulfide).

The protein belongs to the HCP family. [4Fe-4S] cluster serves as cofactor. Requires hybrid [4Fe-2O-2S] cluster as cofactor.

It is found in the cytoplasm. It carries out the reaction A + NH4(+) + H2O = hydroxylamine + AH2 + H(+). Its function is as follows. Catalyzes the reduction of hydroxylamine to form NH(3) and H(2)O. The polypeptide is Hydroxylamine reductase (Acidithiobacillus ferridurans).